A 481-amino-acid chain; its full sequence is uncharacterized protein (481 aa).

The protein to M.tuberculosis RV2411c.

This is an uncharacterized protein from Synechocystis sp. (strain ATCC 27184 / PCC 6803 / Kazusa).